A 396-amino-acid chain; its full sequence is Probable peptidoglycan glycosyltransferase FtsW (396 aa).

The next 9 helical transmembrane spans lie at 17–37 (FCDGWLLVATLSLMLIGWVMV), 61–81 (VFVLCSMVVALLVLRIPMAWW), 83–103 (ANGPLLLLVGLALLALVLVAG), 117–137 (GIPLNLQASEIAKLCLIVYLA), 159–179 (MVMAVMGVLLIFEPDYGAVVV), 198–218 (FLLLMGLVAALGAALAIAEPY), 274–294 (FVFAVLAEELGMIGAVAVIGL), 316–336 (FAAYLCYGIALVIGAQAFINI), and 350–370 (LPLLSYGGSSLVISAVMVGML).

It belongs to the SEDS family. FtsW subfamily.

It localises to the cell inner membrane. It catalyses the reaction [GlcNAc-(1-&gt;4)-Mur2Ac(oyl-L-Ala-gamma-D-Glu-L-Lys-D-Ala-D-Ala)](n)-di-trans,octa-cis-undecaprenyl diphosphate + beta-D-GlcNAc-(1-&gt;4)-Mur2Ac(oyl-L-Ala-gamma-D-Glu-L-Lys-D-Ala-D-Ala)-di-trans,octa-cis-undecaprenyl diphosphate = [GlcNAc-(1-&gt;4)-Mur2Ac(oyl-L-Ala-gamma-D-Glu-L-Lys-D-Ala-D-Ala)](n+1)-di-trans,octa-cis-undecaprenyl diphosphate + di-trans,octa-cis-undecaprenyl diphosphate + H(+). It participates in cell wall biogenesis; peptidoglycan biosynthesis. Functionally, peptidoglycan polymerase that is essential for cell division. This is Probable peptidoglycan glycosyltransferase FtsW from Halomonas elongata (strain ATCC 33173 / DSM 2581 / NBRC 15536 / NCIMB 2198 / 1H9).